Reading from the N-terminus, the 211-residue chain is MNSAQKKPQPPPLSLPWFQSVNRFWVQNQGRFMAKIMPGEYYVTNQQELIGTVLGSCISACVRDPASGIGGMNHFMLPQNAGGGRMDILSDAFRYGNYAMEHLINDVMKLTGKRSTLEVKIFGGANVIRGMSSVGDKNIEFVRRYLEVDGFKIASEDVGGDYPRKILYDPTNGKVMMKRLKSLHNDTVIQREEHYMDELSHTKVAGDVDLF.

Belongs to the CheD family.

The catalysed reaction is L-glutaminyl-[protein] + H2O = L-glutamyl-[protein] + NH4(+). In terms of biological role, probably deamidates glutamine residues to glutamate on methyl-accepting chemotaxis receptors (MCPs), playing an important role in chemotaxis. In Hahella chejuensis (strain KCTC 2396), this protein is Probable chemoreceptor glutamine deamidase CheD.